The chain runs to 565 residues: 13S globulin seed storage protein 1 (565 aa).

An N-terminal signal peptide occupies residues 1–20 (MSTKLILSFSLCLMVLSCSA). 2 disulfide bridges follow: Cys-44–Cys-77 and Cys-120–Cys-384. One can recognise a Cupin type-1 1 domain in the interval 49 to 331 (LTASEPSRRV…FRNVDQETIS (283 aa)). Disordered regions lie at residues 126-224 (SESE…IRDG), 271-301 (GQSK…SDDD), and 356-376 (EYEE…SGRS). Composition is skewed to basic and acidic residues over residues 137–224 (RDQR…IRDG), 275–297 (QSRE…QSRE), and 356–370 (EYEE…DRKR). Positions 390–539 (QNVNRPSRAD…SYDISTKEAF (150 aa)) constitute a Cupin type-1 2 domain.

Belongs to the 11S seed storage protein (globulins) family. In terms of assembly, hexamer; each subunit is composed of an acidic and a basic chain derived from a single precursor and linked by a disulfide bond. As to expression, expressed only in immature seeds.

Its function is as follows. Seed storage protein. The polypeptide is 13S globulin seed storage protein 1 (FA02) (Fagopyrum esculentum (Common buckwheat)).